Here is a 31-residue protein sequence, read N- to C-terminus: Photosystem I reaction center subunit XII (31 aa).

The helical transmembrane segment at 7-26 (QVYIALLTALIPAFFALKLG) threads the bilayer.

It belongs to the PsaM family.

It localises to the plastid. Its subcellular location is the chloroplast thylakoid membrane. The sequence is that of Photosystem I reaction center subunit XII from Euglena viridis (Cercaria viridis).